Here is a 95-residue protein sequence, read N- to C-terminus: Small integral membrane protein 18 (95 aa).

Residues 35 to 55 (CFVILLLFIFTVVSLVVLAFL) traverse the membrane as a helical segment.

The protein resides in the membrane. This Homo sapiens (Human) protein is Small integral membrane protein 18 (SMIM18).